The sequence spans 150 residues: Protein ADM2 (150 aa).

Positions methionine 1 to serine 25 are cleaved as a signal peptide. Residues glycine 26–serine 100 constitute a propeptide that is removed on maturation. The disordered stretch occupies residues leucine 28–arginine 102. Cysteines 112 and 117 form a disulfide. A Tyrosine amide modification is found at tyrosine 149.

The protein belongs to the adrenomedullin family. As to expression, high expression detected in the submaxillary gland, kidney, stomach, and mesentery, followed by the pituitary, lung, pancreas, intestines, spleen, thymus and ovary. Expressed mainly in the intermediate lobe of the pituitary, with sporadic in the anterior lobe.

Its subcellular location is the secreted. In terms of biological role, intermedin/ADM2 is a peptide hormone that plays a role as physiological regulator of gastrointestinal and cardiovascular bioactivities mediated by the CALCRL-RAMPs receptor complexes. Activates the cAMP-dependent pathway through interaction with CALCRL-RAMP3 receptor complex. The polypeptide is Protein ADM2 (Mus musculus (Mouse)).